The chain runs to 127 residues: Holo-[acyl-carrier-protein] synthase (127 aa).

2 residues coordinate Mg(2+): aspartate 8 and glutamate 56.

This sequence belongs to the P-Pant transferase superfamily. AcpS family. Mg(2+) serves as cofactor.

It is found in the cytoplasm. It catalyses the reaction apo-[ACP] + CoA = holo-[ACP] + adenosine 3',5'-bisphosphate + H(+). Functionally, transfers the 4'-phosphopantetheine moiety from coenzyme A to a Ser of acyl-carrier-protein. The chain is Holo-[acyl-carrier-protein] synthase from Caldanaerobacter subterraneus subsp. tengcongensis (strain DSM 15242 / JCM 11007 / NBRC 100824 / MB4) (Thermoanaerobacter tengcongensis).